We begin with the raw amino-acid sequence, 1338 residues long: Aldehyde oxidase 1 (1338 aa).

The 2Fe-2S ferredoxin-type domain occupies 5-92 (SELLFYVNGR…GTAVTTVEGI (88 aa)). Mo-molybdopterin is bound by residues Q113 and C151. The FAD-binding PCMH-type domain occupies 236 to 421 (FGSERMMWFS…VSVNIPYSRK (186 aa)). FAD-binding positions include 264 to 271 (VIMGNTSV), A345, S354, H358, D367, and L411. Mo-molybdopterin-binding positions include 806–807 (AF) and M1047. The residue at position 1068 (S1068) is a Phosphoserine. Mo-molybdopterin is bound by residues 1088 to 1091 (GSVV), Q1203, and L1268. The active-site Proton acceptor; for azaheterocycle hydroxylase activity is E1270.

The protein belongs to the xanthine dehydrogenase family. In terms of assembly, homodimer. [2Fe-2S] cluster is required as a cofactor. The cofactor is FAD. Mo-molybdopterin serves as cofactor. As to expression, detected at high levels in liver, also detected in lung, kidney, lacrimal gland and olfactory mucosa.

The protein localises to the cytoplasm. The enzyme catalyses an aldehyde + O2 + H2O = a carboxylate + H2O2 + H(+). It catalyses the reaction retinal + O2 + H2O = retinoate + H2O2 + H(+). Oxidase with broad substrate specificity, oxidizing aromatic azaheterocycles, such as N1-methylnicotinamide, N-methylphthalazinium and phthalazine, as well as aldehydes, such as benzaldehyde, retinal, pyridoxal, and vanillin. Plays a key role in the metabolism of xenobiotics and drugs containing aromatic azaheterocyclic substituents. Participates in the bioactivation of prodrugs such as famciclovir, catalyzing the oxidation step from 6-deoxypenciclovir to penciclovir, which is a potent antiviral agent. Is probably involved in the regulation of reactive oxygen species homeostasis. May be a prominent source of superoxide generation via the one-electron reduction of molecular oxygen. May also catalyze nitric oxide (NO) production via the reduction of nitrite to NO with NADH or aldehyde as electron donor. May play a role in adipogenesis. The sequence is that of Aldehyde oxidase 1 (AOX1) from Macaca fascicularis (Crab-eating macaque).